Here is a 370-residue protein sequence, read N- to C-terminus: Probable dual-specificity RNA methyltransferase RlmN (370 aa).

Glutamate 91 serves as the catalytic Proton acceptor. Residues 97–329 (QHYGLSVCVT…KKNGVNCVVR (233 aa)) form the Radical SAM core domain. The cysteines at positions 104 and 340 are disulfide-linked. Residues cysteine 111, cysteine 115, and cysteine 118 each contribute to the [4Fe-4S] cluster site. S-adenosyl-L-methionine-binding positions include 163-164 (GE), serine 195, 218-220 (SLH), and asparagine 296. Cysteine 340 acts as the S-methylcysteine intermediate in catalysis.

This sequence belongs to the radical SAM superfamily. RlmN family. The cofactor is [4Fe-4S] cluster.

Its subcellular location is the cytoplasm. It catalyses the reaction adenosine(2503) in 23S rRNA + 2 reduced [2Fe-2S]-[ferredoxin] + 2 S-adenosyl-L-methionine = 2-methyladenosine(2503) in 23S rRNA + 5'-deoxyadenosine + L-methionine + 2 oxidized [2Fe-2S]-[ferredoxin] + S-adenosyl-L-homocysteine. The catalysed reaction is adenosine(37) in tRNA + 2 reduced [2Fe-2S]-[ferredoxin] + 2 S-adenosyl-L-methionine = 2-methyladenosine(37) in tRNA + 5'-deoxyadenosine + L-methionine + 2 oxidized [2Fe-2S]-[ferredoxin] + S-adenosyl-L-homocysteine. Specifically methylates position 2 of adenine 2503 in 23S rRNA and position 2 of adenine 37 in tRNAs. The sequence is that of Probable dual-specificity RNA methyltransferase RlmN from Streptococcus suis (strain 98HAH33).